Reading from the N-terminus, the 203-residue chain is NADH-quinone oxidoreductase subunit C (203 aa).

It belongs to the complex I 30 kDa subunit family. In terms of assembly, NDH-1 is composed of 14 different subunits. Subunits NuoB, C, D, E, F, and G constitute the peripheral sector of the complex.

Its subcellular location is the cell inner membrane. The catalysed reaction is a quinone + NADH + 5 H(+)(in) = a quinol + NAD(+) + 4 H(+)(out). In terms of biological role, NDH-1 shuttles electrons from NADH, via FMN and iron-sulfur (Fe-S) centers, to quinones in the respiratory chain. The immediate electron acceptor for the enzyme in this species is believed to be ubiquinone. Couples the redox reaction to proton translocation (for every two electrons transferred, four hydrogen ions are translocated across the cytoplasmic membrane), and thus conserves the redox energy in a proton gradient. The polypeptide is NADH-quinone oxidoreductase subunit C (Methylibium petroleiphilum (strain ATCC BAA-1232 / LMG 22953 / PM1)).